We begin with the raw amino-acid sequence, 131 residues long: Glycine cleavage system H protein (131 aa).

Positions 24 to 106 (RVTVGISDHA…YGEGWIFVVE (83 aa)) constitute a Lipoyl-binding domain. At lysine 65 the chain carries N6-lipoyllysine.

This sequence belongs to the GcvH family. As to quaternary structure, the glycine cleavage system is composed of four proteins: P, T, L and H. It depends on (R)-lipoate as a cofactor.

In terms of biological role, the glycine cleavage system catalyzes the degradation of glycine. The H protein shuttles the methylamine group of glycine from the P protein to the T protein. This chain is Glycine cleavage system H protein, found in Xanthomonas oryzae pv. oryzae (strain MAFF 311018).